The primary structure comprises 174 residues: RxLR effector protein 207 (174 aa).

The N-terminal stretch at 1–20 is a signal peptide; sequence MSKVFLLLVLSVFALVSCDA. Positions 46-62 match the RxLR-dEER motif; that stretch reads RMLRAQEEPTNAADEER. The tract at residues 82–99 is disordered; the sequence is VTNSKLVQSMNNKLASLT.

It belongs to the RxLR effector family. As to quaternary structure, interacts with Nicotiana benthamiana ACD11, BPA1 (binding partner of ACD11), as well as BPA-like proteins BPL1, BPL2, BPL3 and BPL4.

The protein localises to the secreted. It is found in the host cell membrane. Functionally, secreted effector that activates ROS-mediated cell death in plant host and is essential for virulence. Plays a role in the transition from the biotrophic to necrotrophic stage. Associates with and promotes the degradation of Nicotiana benthamiana BPA1, BPL1, BPL2, and BPL4 to disrupt ACD11 stabilization in a 26S proteasome-dependent manner. This chain is RxLR effector protein 207, found in Phytophthora capsici.